The primary structure comprises 502 residues: Neuronal acetylcholine receptor subunit alpha-7 (502 aa).

The N-terminal stretch at 1 to 23 (MGLRALMLWLLAAAGLVRESLQG) is a signal peptide. Topologically, residues 24-233 (EFQRKLYKEL…VTMRRRTLYY (210 aa)) are extracellular. Ca(2+) contacts are provided by R42 and V44. N46, N90, and N133 each carry an N-linked (GlcNAc...) asparagine glycan. C150 and C164 form a disulfide bridge. Ca(2+) is bound by residues T172 and Y210. A disulfide bridge connects residues C212 and C213. 3 consecutive transmembrane segments (helical) span residues 234–254 (GLNLLIPCVLISALALLVFLL), 262–282 (ISLGITVLLSLTVFMLLVAEI), and 295–315 (QYFASTMIIVGLSVVVTVIVL). The Cytoplasmic segment spans residues 316–469 (QYHHHDPDGG…WKFAASVVDR (154 aa)). The chain crosses the membrane as a helical span at residues 470-490 (LCLMAFSVFTIICTIGILMSA).

Belongs to the ligand-gated ion channel (TC 1.A.9) family. Acetylcholine receptor (TC 1.A.9.1) subfamily. Alpha-7/CHRNA7 sub-subfamily. As to quaternary structure, homopentamer. Can also form heteropentamers with CHRNB2, mainly found in basal forebrain cholinergic neurons.

It is found in the postsynaptic cell membrane. The protein resides in the cell membrane. The catalysed reaction is Ca(2+)(in) = Ca(2+)(out). The enzyme catalyses K(+)(in) = K(+)(out). It carries out the reaction Na(+)(in) = Na(+)(out). It catalyses the reaction choline(out) = choline(in). The catalysed reaction is NH4(+)(in) = NH4(+)(out). The enzyme catalyses L-arginine(in) = L-arginine(out). It carries out the reaction guanidine(out) = guanidine(in). Its activity is regulated as follows. Activated by a myriad of ligands such as acetylcholine, cytisine, nicotine, choline and epibatidine. Activity is modulated by positive allosteric modulators (PAMs), such as flavonoids, with a wide range of chemical diversity, pharmacological sensitivity and efficacy. AChR activity is inhibited by the antagonists alpha-conotoxons RgIA, ImI and ImII, small disulfide-constrained peptides from cone snails. In terms of biological role, component of neuronal acetylcholine receptors (nAChRs) that function as pentameric, ligand-gated cation channels with high calcium permeability among other activities. nAChRs are excitatory neurotrasnmitter receptors formed by a collection of nAChR subunits known to mediate synaptic transmission in the nervous system and the neuromuscular junction. Each nAchR subunit confers differential attributes to channel properties, including activation, deactivation and desensitization kinetics, pH sensitivity, cation permeability, and binding to allosteric modulators. CHRNA7 is an homooligomeric neuronal acetylcholine receptor abundantly expressed in the central nervous system. Characterized by a fast desensitization and high calcium permeability. Also expressed in non-neuronal cells such as immune cells like lymphocytes, monocytes and macrophages. This Gallus gallus (Chicken) protein is Neuronal acetylcholine receptor subunit alpha-7 (CHRNA7).